A 186-amino-acid polypeptide reads, in one-letter code: Ribosome-recycling factor (186 aa).

Belongs to the RRF family.

It localises to the cytoplasm. Its function is as follows. Responsible for the release of ribosomes from messenger RNA at the termination of protein biosynthesis. May increase the efficiency of translation by recycling ribosomes from one round of translation to another. This is Ribosome-recycling factor from Maricaulis maris (strain MCS10) (Caulobacter maris).